The chain runs to 415 residues: Diaminopimelate decarboxylase (415 aa).

The residue at position 54 (lysine 54) is an N6-(pyridoxal phosphate)lysine. Residues glycine 223 and 264–267 (EPGR) contribute to the pyridoxal 5'-phosphate site. Substrate contacts are provided by arginine 267, arginine 303, and tyrosine 307. Cysteine 338 acts as the Proton donor in catalysis. Residues glutamate 339 and tyrosine 374 each coordinate substrate. Residue tyrosine 374 coordinates pyridoxal 5'-phosphate.

It belongs to the Orn/Lys/Arg decarboxylase class-II family. LysA subfamily. Homodimer. It depends on pyridoxal 5'-phosphate as a cofactor.

The catalysed reaction is meso-2,6-diaminopimelate + H(+) = L-lysine + CO2. It participates in amino-acid biosynthesis; L-lysine biosynthesis via DAP pathway; L-lysine from DL-2,6-diaminopimelate: step 1/1. Specifically catalyzes the decarboxylation of meso-diaminopimelate (meso-DAP) to L-lysine. The sequence is that of Diaminopimelate decarboxylase from Buchnera aphidicola subsp. Schizaphis graminum (strain Sg).